Here is a 160-residue protein sequence, read N- to C-terminus: Large ribosomal subunit protein bL17 (160 aa).

Over residues 123-141 the composition is skewed to basic and acidic residues; the sequence is DEKRQKRAEARAKRREEMQ. Residues 123 to 160 form a disordered region; it reads DEKRQKRAEARAKRREEMQKAMAEQQQAEGGEPEGGNE. The segment covering 142–152 has biased composition (low complexity); the sequence is KAMAEQQQAEG.

Belongs to the bacterial ribosomal protein bL17 family. As to quaternary structure, part of the 50S ribosomal subunit. Contacts protein L32.

The protein is Large ribosomal subunit protein bL17 of Acidobacterium capsulatum (strain ATCC 51196 / DSM 11244 / BCRC 80197 / JCM 7670 / NBRC 15755 / NCIMB 13165 / 161).